The chain runs to 1005 residues: Beta-galactosidase (1005 aa).

The active-site Proton donor is the E455. E526 (nucleophile) is an active-site residue.

It belongs to the glycosyl hydrolase 2 family.

The catalysed reaction is Hydrolysis of terminal non-reducing beta-D-galactose residues in beta-D-galactosides.. The protein is Beta-galactosidase (lacZ) of Actinobacillus pleuropneumoniae (Haemophilus pleuropneumoniae).